The following is a 293-amino-acid chain: Autophagy-related protein 36 (293 aa).

Polar residues-rich tracts occupy residues 98-108 (ISSDSNKNSPP) and 260-273 (GETL…ASSS). Disordered stretches follow at residues 98-121 (ISSD…NIRS) and 250-273 (SRSR…ASSS).

Interacts with PEX3, ATG8 and ATG11.

It localises to the peroxisome. Its function is as follows. Required for autophagic breakdown of peroxisomes, called pexophagy, through linking peroxisomes to the autophagy apparatus. Involved in regulation of the glyoxylate cycle. This chain is Autophagy-related protein 36 (ATG36), found in Saccharomyces cerevisiae (strain ATCC 204508 / S288c) (Baker's yeast).